The following is a 486-amino-acid chain: Hexokinase-2 (486 aa).

At Ser-15 the chain carries Phosphoserine. Residues 21–469 (KELMQQIENF…SGAGAAVIAA (449 aa)) form the Hexokinase domain. Thr-38 carries the post-translational modification Phosphothreonine. A hexokinase small subdomain region spans residues 75–209 (TGKESGDFLA…NIPIEVVALI (135 aa)). Residues 86–91 (DLGGTN) and Lys-111 each bind ATP. Ser-158 bears the Phosphoserine mark. Substrate contacts are provided by residues Ser-158, 175–176 (TK), 210–211 (ND), and Asn-237. Positions 210-458 (NDTTGTLVAS…YPIKIVPAED (249 aa)) are hexokinase large subdomain. Position 245 is a phosphoserine (Ser-245). Glu-269 serves as a coordination point for substrate. Ser-272 is subject to Phosphoserine. Residue Glu-302 participates in substrate binding. ATP contacts are provided by residues 307 to 308 (GY), 344 to 348 (TSYPA), and 419 to 423 (SVYNR).

The protein belongs to the hexokinase family. Homodimer.

It carries out the reaction a D-hexose + ATP = a D-hexose 6-phosphate + ADP + H(+). The enzyme catalyses D-fructose + ATP = D-fructose 6-phosphate + ADP + H(+). The catalysed reaction is D-glucose + ATP = D-glucose 6-phosphate + ADP + H(+). Its pathway is carbohydrate metabolism; hexose metabolism. The protein operates within carbohydrate degradation; glycolysis; D-glyceraldehyde 3-phosphate and glycerone phosphate from D-glucose: step 1/4. Its activity is regulated as follows. Subject to allosteric control. Substrate inhibition by ATP. Functionally, catalyzes the phosphorylation of hexose, such as D-glucose and D-fructose, to hexose 6-phosphate (D-glucose 6-phosphate and D-fructose 6-phosphate, respectively). Mediates the initial step of glycolysis by catalyzing phosphorylation of D-glucose to D-glucose 6-phosphate. The protein is Hexokinase-2 (HXK2) of Saccharomyces cerevisiae (strain ATCC 204508 / S288c) (Baker's yeast).